The following is a 137-amino-acid chain: ATP synthase epsilon chain (137 aa).

This sequence belongs to the ATPase epsilon chain family. As to quaternary structure, F-type ATPases have 2 components, CF(1) - the catalytic core - and CF(0) - the membrane proton channel. CF(1) has five subunits: alpha(3), beta(3), gamma(1), delta(1), epsilon(1). CF(0) has three main subunits: a, b and c.

The protein localises to the cellular thylakoid membrane. Its function is as follows. Produces ATP from ADP in the presence of a proton gradient across the membrane. In Trichormus variabilis (strain ATCC 29413 / PCC 7937) (Anabaena variabilis), this protein is ATP synthase epsilon chain.